Reading from the N-terminus, the 415-residue chain is Thyroxine-binding globulin (415 aa).

The N-terminal stretch at 1–20 is a signal peptide; that stretch reads MSPFLYLVLLVLGLHATIHC. Asn-36 carries an N-linked (GlcNAc...) (complex) asparagine glycan. N-linked (GlcNAc...) asparagine glycosylation occurs at Asn-99. Ile-116 carries an N-linked (GlcNAc...) asparagine; in variant Gary glycan. N-linked (GlcNAc...) asparagine glycosylation is found at Asn-165 and Asn-253. Thyroxine is bound by residues Asn-293 and Arg-398.

Belongs to the serpin family. As to expression, expressed by the liver and secreted in plasma.

The protein resides in the secreted. In terms of biological role, major thyroid hormone transport protein in serum. The protein is Thyroxine-binding globulin (SERPINA7) of Homo sapiens (Human).